The following is a 1096-amino-acid chain: Protein spire (1096 aa).

Disordered regions lie at residues M1–T79 and V184–V211. Residues L37 to A51 show a composition bias toward polar residues. A compositionally biased stretch (basic residues) spans T53–G65. Composition is skewed to low complexity over residues A66–N77 and Q189–P201. Residues V111–L366 form the KIND domain. Residues K315–N340 are a coiled coil. WH2 domains lie at P436–V454 and P500–I517. Disordered stretches follow at residues D560–A588, Q614–T656, and Q693–W762. The segment covering H574–A585 has biased composition (basic residues). Low complexity-rich tracts occupy residues A633 to A645 and D714 to S725. Residues E737–H754 show a composition bias toward basic and acidic residues. The tract at residues L780 to E800 is spir-box. Residues P874 to T894 show a composition bias toward low complexity. Disordered stretches follow at residues P874–D899, R912–H958, and R997–L1021. Residues S921 to G941 show a composition bias toward polar residues.

Belongs to the spire family. Interacts with bsk, Rho1, Rac1, Cdc42 and wash. Interacts with capu. Phosphorylated by Jnk kinase (bsk).

It is found in the cytoplasm. Its subcellular location is the cytoskeleton. The protein resides in the perinuclear region. The protein localises to the cell membrane. It localises to the cytoplasmic vesicle membrane. Its function is as follows. Acts as an actin nucleation factor, remains associated with the slow-growing pointed end of the new filament. Promotes dissociation of capu from the barbed end of actin filaments. Involved in intracellular vesicle transport along actin fibers, providing a novel link between actin cytoskeleton dynamics and intracellular transport. Required for localization of determinants within the developing oocyte to the posterior pole and to the dorsal anterior corner. Links Rho family signaling and Jnk function to the actin cytoskeleton. This Drosophila pseudoobscura pseudoobscura (Fruit fly) protein is Protein spire.